The primary structure comprises 269 residues: Hydroxyethylthiazole kinase (269 aa).

Residue M45 coordinates substrate. ATP contacts are provided by R121 and T167. G194 serves as a coordination point for substrate.

This sequence belongs to the Thz kinase family. It depends on Mg(2+) as a cofactor.

The enzyme catalyses 5-(2-hydroxyethyl)-4-methylthiazole + ATP = 4-methyl-5-(2-phosphooxyethyl)-thiazole + ADP + H(+). It functions in the pathway cofactor biosynthesis; thiamine diphosphate biosynthesis; 4-methyl-5-(2-phosphoethyl)-thiazole from 5-(2-hydroxyethyl)-4-methylthiazole: step 1/1. Its function is as follows. Catalyzes the phosphorylation of the hydroxyl group of 4-methyl-5-beta-hydroxyethylthiazole (THZ). The protein is Hydroxyethylthiazole kinase of Brevibacillus brevis (strain 47 / JCM 6285 / NBRC 100599).